Here is a 1215-residue protein sequence, read N- to C-terminus: Zinc finger SWIM domain-containing protein 6 (1215 aa).

2 disordered regions span residues 1–46 (MAER…RPGP) and 133–161 (AAGG…SPAA). Composition is skewed to gly residues over residues 18 to 38 (PGGG…GGGY) and 133 to 155 (AAGG…GGGS). An SWIM-type zinc finger spans residues 246 to 283 (CNVAISFDRCKITSVTCSCGNKDIFYCAHVVALSLYRI).

Its function is as follows. involved in nervous system development, important for striatal morphology and motor regulation. This chain is Zinc finger SWIM domain-containing protein 6, found in Homo sapiens (Human).